A 291-amino-acid chain; its full sequence is Oxidative stress-responsive serine-rich protein 1 (291 aa).

A disordered region spans residues 48–174 (EDAKPKSACA…SSDAPQVSQA (127 aa)). Positions 65 to 83 (STRKSSRGAVRTQRRRRSK) are enriched in basic residues. The segment covering 132–142 (ECSSSLDTNHT) has biased composition (polar residues). Thr142 and Thr232 each carry phosphothreonine.

The sequence is that of Oxidative stress-responsive serine-rich protein 1 (OSER1) from Bos taurus (Bovine).